A 379-amino-acid chain; its full sequence is UDP-4-amino-4-deoxy-L-arabinose--oxoglutarate aminotransferase (379 aa).

K182 is modified (N6-(pyridoxal phosphate)lysine).

Belongs to the DegT/DnrJ/EryC1 family. ArnB subfamily. As to quaternary structure, homodimer. Pyridoxal 5'-phosphate is required as a cofactor.

The enzyme catalyses UDP-4-amino-4-deoxy-beta-L-arabinose + 2-oxoglutarate = UDP-beta-L-threo-pentopyranos-4-ulose + L-glutamate. The protein operates within nucleotide-sugar biosynthesis; UDP-4-deoxy-4-formamido-beta-L-arabinose biosynthesis; UDP-4-deoxy-4-formamido-beta-L-arabinose from UDP-alpha-D-glucuronate: step 2/3. Its pathway is bacterial outer membrane biogenesis; lipopolysaccharide biosynthesis. Functionally, catalyzes the conversion of UDP-4-keto-arabinose (UDP-Ara4O) to UDP-4-amino-4-deoxy-L-arabinose (UDP-L-Ara4N). The modified arabinose is attached to lipid A and is required for resistance to polymyxin and cationic antimicrobial peptides. This Escherichia coli O157:H7 protein is UDP-4-amino-4-deoxy-L-arabinose--oxoglutarate aminotransferase.